The primary structure comprises 100 residues: Urease subunit gamma (100 aa).

The protein belongs to the urease gamma subunit family. As to quaternary structure, heterotrimer of UreA (gamma), UreB (beta) and UreC (alpha) subunits. Three heterotrimers associate to form the active enzyme.

The protein resides in the cytoplasm. It catalyses the reaction urea + 2 H2O + H(+) = hydrogencarbonate + 2 NH4(+). It functions in the pathway nitrogen metabolism; urea degradation; CO(2) and NH(3) from urea (urease route): step 1/1. In Escherichia coli, this protein is Urease subunit gamma.